Reading from the N-terminus, the 478-residue chain is Cell division protein FtsZ homolog 2-1, chloroplastic (478 aa).

The tract at residues E86–A112 is disordered. Residue G128–N132 coordinates GTP. S143 is modified (phosphoserine; by PGK1). GTP contacts are provided by residues G217–G219, E248, and R252. T286 is modified (phosphothreonine; by PGK1). D296 provides a ligand contact to GTP.

The protein belongs to the FtsZ family. In terms of assembly, aggregates to form a contractile ring-like structure; contraction of the ring was accompanied by an increase in the filament turnover rate. Self-interacts and binds to FTSZ1 in heteromers to form two morphologically distinct types of filaments, termed type-I (smooth filaments) and -II (rough filaments), in a GTP-dependent manner; the GDP-induced disassembly is inhibited by ARC6. Interacts (via C-terminus) with ARC6; this interaction enables ARC3 binding to FTSZ2. Part of a complex made of ARC3, ARC6, FTSZ1 and FTSZ2. Binds to MCD1 in an ARC6-dependent manner. Binds to CDP1/PARC6. Part of a complex made of CDP1/PARC6, ARC3 and FtsZ proteins in the middle of the plastid; this complex enhances the dynamics of Z rings during chloroplast division. Binds to PGK1. Filaments containing FTSZ2-1 are stabilized when in complex with GTP but destabilized after conversion of GTP into GDP; ARC6 conteracts this destabilisation by preventing the dissociation of GDP-bound FTSZ2 molecules thus inhibiting filament disassembly whereas ARC3 promotes GTPase activity thus accelerating the conversion of GTP into GDP and triggering FtsZ2 filaments disassembly. In terms of processing, phosphorylation at Ser-143 is necessary for interactions with ARC3, ARC6, FTSZ1 and FTSZ2-2. Phosphorylations at Ser-143 and Thr-286 are required for the formation of contractile ring at the chloroplast midpoint.

Its subcellular location is the plastid. The protein localises to the chloroplast stroma. The protein resides in the chloroplast thylakoid membrane. GTPase activity is enhanced by ARC3. Its function is as follows. Exhibits GTPase activity which converts GTP ligands to GDP. Component of the plastid division machinery consisting in a binary fission accomplished by the simultaneous constriction of the FtsZ ring on the stromal side of the inner envelope membrane, and the ARC5 ring on the cytosolic side of the outer envelope membrane. Required for plastid division in a dose-dependent manner. In the vegetative shoot apex, at the shoot apical meristem (SAM), where the proplastid-to-chloroplast transition takes place, major contributor of plastid division in the L1 and L3 layers and contributes equally with FTSZ1 in the L2 layer. In Arabidopsis thaliana (Mouse-ear cress), this protein is Cell division protein FtsZ homolog 2-1, chloroplastic.